The primary structure comprises 129 residues: NADH-quinone oxidoreductase subunit K 2 (129 aa).

Helical transmembrane passes span leucine 3 to alanine 23, isoleucine 28 to phenylalanine 48, and leucine 68 to valine 88. The tract at residues aspartate 98–alanine 129 is disordered. Residues glycine 111–alanine 122 are compositionally biased toward low complexity.

This sequence belongs to the complex I subunit 4L family. NDH-1 is composed of 14 different subunits. Subunits NuoA, H, J, K, L, M, N constitute the membrane sector of the complex.

It is found in the cell membrane. The enzyme catalyses a quinone + NADH + 5 H(+)(in) = a quinol + NAD(+) + 4 H(+)(out). Functionally, NDH-1 shuttles electrons from NADH, via FMN and iron-sulfur (Fe-S) centers, to quinones in the respiratory chain. The immediate electron acceptor for the enzyme in this species is believed to be a menaquinone. Couples the redox reaction to proton translocation (for every two electrons transferred, four hydrogen ions are translocated across the cytoplasmic membrane), and thus conserves the redox energy in a proton gradient. The chain is NADH-quinone oxidoreductase subunit K 2 from Streptomyces avermitilis (strain ATCC 31267 / DSM 46492 / JCM 5070 / NBRC 14893 / NCIMB 12804 / NRRL 8165 / MA-4680).